The chain runs to 113 residues: Heavy metal-associated isoprenylated plant protein 15 (113 aa).

Residues 1-65 (MIVWMGVYDQ…KWGKAKLTLY (65 aa)) enclose the HMA domain. Residues 69 to 89 (DALKEAKIAEAKQKREEIERE) adopt a coiled-coil conformation. C110 bears the Cysteine methyl ester mark. The S-farnesyl cysteine moiety is linked to residue C110. The propeptide at 111–113 (VIC) is removed in mature form.

Belongs to the HIPP family. Expressed in embryo sacs.

In terms of biological role, probable heavy-metal-binding protein. The sequence is that of Heavy metal-associated isoprenylated plant protein 15 from Arabidopsis thaliana (Mouse-ear cress).